The following is a 256-amino-acid chain: Rhamnolipids biosynthesis 3-oxoacyl-[acyl-carrier-protein] reductase (256 aa).

14-38 lines the NADP(+) pocket; the sequence is VTGGSRGIGQMIAQGLLEAGARVFI. Ser148 contributes to the substrate binding site. The active-site Proton acceptor is the Tyr162.

The protein belongs to the short-chain dehydrogenases/reductases (SDR) family.

It carries out the reaction a (3R)-hydroxyacyl-[ACP] + NADP(+) = a 3-oxoacyl-[ACP] + NADPH + H(+). It participates in lipid metabolism; rhamnolipid biosynthesis. Functionally, required for the synthesis of the beta-hydroxy acid moiety of rhamnolipids. This chain is Rhamnolipids biosynthesis 3-oxoacyl-[acyl-carrier-protein] reductase (rhlG), found in Pseudomonas aeruginosa (strain ATCC 15692 / DSM 22644 / CIP 104116 / JCM 14847 / LMG 12228 / 1C / PRS 101 / PAO1).